The following is a 129-amino-acid chain: Small ribosomal subunit protein uS11 (129 aa).

It belongs to the universal ribosomal protein uS11 family. In terms of assembly, part of the 30S ribosomal subunit. Interacts with proteins S7 and S18. Binds to IF-3.

Its function is as follows. Located on the platform of the 30S subunit, it bridges several disparate RNA helices of the 16S rRNA. Forms part of the Shine-Dalgarno cleft in the 70S ribosome. The sequence is that of Small ribosomal subunit protein uS11 from Allorhizobium ampelinum (strain ATCC BAA-846 / DSM 112012 / S4) (Agrobacterium vitis (strain S4)).